The primary structure comprises 386 residues: Mannitol-1-phosphate 5-dehydrogenase (386 aa).

6–17 (AIHFGGGNIGRG) is an NAD(+) binding site. Lys-214 is a catalytic residue.

Belongs to the mannitol dehydrogenase family. As to quaternary structure, monomer.

The catalysed reaction is D-mannitol 1-phosphate + NAD(+) = beta-D-fructose 6-phosphate + NADH + H(+). In terms of biological role, catalyzes the NAD(H)-dependent interconversion of D-fructose 6-phosphate and D-mannitol 1-phosphate in the mannitol metabolic pathway. Plays a key role in liamocins biosynthesis by providing the mannitol moity that is linked to 3,5-dihydroxydecanoic acid (provided by the HR-PKS PKS1) via ester bond formation catalyzed by the esterase EST1. The protein is Mannitol-1-phosphate 5-dehydrogenase of Aureobasidium melanogenum (Aureobasidium pullulans var. melanogenum).